The sequence spans 237 residues: Phosphoribosylaminoimidazole-succinocarboxamide synthase (237 aa).

The protein belongs to the SAICAR synthetase family.

It carries out the reaction 5-amino-1-(5-phospho-D-ribosyl)imidazole-4-carboxylate + L-aspartate + ATP = (2S)-2-[5-amino-1-(5-phospho-beta-D-ribosyl)imidazole-4-carboxamido]succinate + ADP + phosphate + 2 H(+). It functions in the pathway purine metabolism; IMP biosynthesis via de novo pathway; 5-amino-1-(5-phospho-D-ribosyl)imidazole-4-carboxamide from 5-amino-1-(5-phospho-D-ribosyl)imidazole-4-carboxylate: step 1/2. This chain is Phosphoribosylaminoimidazole-succinocarboxamide synthase, found in Klebsiella pneumoniae (strain 342).